A 124-amino-acid chain; its full sequence is UPF0299 membrane protein VP1300 (124 aa).

The next 4 helical transmembrane spans lie at 9 to 29 (LIQLLISLFLIMGALGIGITI), 35 to 55 (VSVPGSVIGMLVLFFSMTLGL), 72 to 92 (MILLFVPISVGLMQHFDMLLA), and 95 to 115 (LPIIASAVGGSLIVLVSLAWL).

The protein belongs to the UPF0299 family.

It is found in the cell inner membrane. This Vibrio parahaemolyticus serotype O3:K6 (strain RIMD 2210633) protein is UPF0299 membrane protein VP1300.